The following is a 312-amino-acid chain: Glyoxylate/hydroxypyruvate reductase A (312 aa).

Arginine 227 is an active-site residue. Histidine 275 functions as the Proton donor in the catalytic mechanism.

The protein belongs to the D-isomer specific 2-hydroxyacid dehydrogenase family. GhrA subfamily.

The protein localises to the cytoplasm. The enzyme catalyses glycolate + NADP(+) = glyoxylate + NADPH + H(+). It catalyses the reaction (R)-glycerate + NAD(+) = 3-hydroxypyruvate + NADH + H(+). It carries out the reaction (R)-glycerate + NADP(+) = 3-hydroxypyruvate + NADPH + H(+). In terms of biological role, catalyzes the NADPH-dependent reduction of glyoxylate and hydroxypyruvate into glycolate and glycerate, respectively. This chain is Glyoxylate/hydroxypyruvate reductase A, found in Salmonella enteritidis PT4 (strain P125109).